The sequence spans 347 residues: Phenylalanine--tRNA ligase alpha subunit (347 aa).

Residue Glu261 participates in Mg(2+) binding.

The protein belongs to the class-II aminoacyl-tRNA synthetase family. Phe-tRNA synthetase alpha subunit type 1 subfamily. In terms of assembly, tetramer of two alpha and two beta subunits. Mg(2+) is required as a cofactor.

It localises to the cytoplasm. It catalyses the reaction tRNA(Phe) + L-phenylalanine + ATP = L-phenylalanyl-tRNA(Phe) + AMP + diphosphate + H(+). This Streptococcus equi subsp. zooepidemicus (strain MGCS10565) protein is Phenylalanine--tRNA ligase alpha subunit.